A 76-amino-acid chain; its full sequence is Theta defensin subunit A (76 aa).

The signal sequence occupies residues Met-1–Ala-22. Positions Arg-23–Leu-64 are excised as a propeptide. The disordered stretch occupies residues Ala-25–His-45. A compositionally biased stretch (low complexity) spans Ala-30–Ala-44. A Cyclopeptide (Arg-Cys) (interchain with C-73 in subunit A); in form BTD-3 cross-link involves residue Arg-65. Residue Arg-65 forms a Cyclopeptide (Arg-Cys) (interchain with C-73 in subunit B); in form BTD-1 linkage. Arg-65 is covalently cross-linked (Cyclopeptide (Arg-Cys) (interchain with C-73 in subunit C); in form BTD-4). Arg-65 participates in a covalent cross-link: Cyclopeptide (Arg-Cys) (interchain with C-73 in subunit D); in form BTD-7. A disulfide bridge connects residues Cys-68 and Cys-73. A Cyclopeptide (Cys-Arg) (interchain with R-65 in subunit A); in form BTD-3 cross-link involves residue Cys-73. A Cyclopeptide (Cys-Arg) (interchain with R-65 in subunit B); in form BTD-1 cross-link involves residue Cys-73. Cys-73 participates in a covalent cross-link: Cyclopeptide (Cys-Arg) (interchain with R-65 in subunit C); in form BTD-4. A Cyclopeptide (Cys-Arg) (interchain with R-65 in subunit D); in form BTD-7 cross-link involves residue Cys-73. Positions Arg-74–Leu-76 are excised as a propeptide.

The protein belongs to the alpha-defensin family. Theta subfamily. In terms of assembly, BTD-1 is a cyclic heterodimer composed of subunits A and B; disulfide-linked. BTD-3 is a cyclic homodimer composed of two subunits A; disulfide-linked. BTD-4 is a cyclic heterodimer composed of subunits A and C; disulfide-linked. BTD-7 is a cyclic heterodimer composed of subunits A and D; disulfide-linked. In terms of processing, forms a cyclic peptide with subunit B (BTD-1), subunit A (BTD-3), subunit C (BTD-4), or subunit D (BTD-7). An additional intersubunit disulfide bond is formed.

In terms of biological role, BTD-1, BTD-3, BTD-4 and BTD-7 have antimicrobial activity against the Gram-negative bacterium E.coli ML35, the Gram-positive bacterium S.aureus 502a, and the fungus C.albicans 16820. BTD-3 is more effective against E.coli than BTD-1, BTD-4 and BTD-7. In Papio anubis (Olive baboon), this protein is Theta defensin subunit A (BTDA).